A 325-amino-acid chain; its full sequence is Ribose-phosphate pyrophosphokinase 4 (325 aa).

Residues Asp145 and His147 each contribute to the Mg(2+) site. The segment at 228-243 (GRHVVIVDDLVQSGGT) is binding of phosphoribosylpyrophosphate.

It belongs to the ribose-phosphate pyrophosphokinase family. It depends on Mg(2+) as a cofactor.

The enzyme catalyses D-ribose 5-phosphate + ATP = 5-phospho-alpha-D-ribose 1-diphosphate + AMP + H(+). This is Ribose-phosphate pyrophosphokinase 4 from Oryza sativa subsp. japonica (Rice).